We begin with the raw amino-acid sequence, 206 residues long: dTTP/UTP pyrophosphatase (206 aa).

Aspartate 79 serves as the catalytic Proton acceptor.

The protein belongs to the Maf family. YhdE subfamily. Requires a divalent metal cation as cofactor.

Its subcellular location is the cytoplasm. The catalysed reaction is dTTP + H2O = dTMP + diphosphate + H(+). It carries out the reaction UTP + H2O = UMP + diphosphate + H(+). In terms of biological role, nucleoside triphosphate pyrophosphatase that hydrolyzes dTTP and UTP. May have a dual role in cell division arrest and in preventing the incorporation of modified nucleotides into cellular nucleic acids. The sequence is that of dTTP/UTP pyrophosphatase from Rhizobium johnstonii (strain DSM 114642 / LMG 32736 / 3841) (Rhizobium leguminosarum bv. viciae).